A 266-amino-acid polypeptide reads, in one-letter code: Exosome complex component Rrp42 (266 aa).

The protein belongs to the RNase PH family. Rrp42 subfamily. As to quaternary structure, component of the archaeal exosome complex. Forms a hexameric ring-like arrangement composed of 3 Rrp41-Rrp42 heterodimers. The hexameric ring associates with a trimer of Rrp4 and/or Csl4 subunits.

Its subcellular location is the cytoplasm. Its function is as follows. Non-catalytic component of the exosome, which is a complex involved in RNA degradation. Contributes to the structuring of the Rrp41 active site. In Methanosarcina acetivorans (strain ATCC 35395 / DSM 2834 / JCM 12185 / C2A), this protein is Exosome complex component Rrp42.